The sequence spans 381 residues: tRNA-cytidine(32) 2-sulfurtransferase (381 aa).

A PP-loop motif motif is present at residues 101-106 (SGGKDS). Residues Cys176, Cys179, and Cys267 each coordinate [4Fe-4S] cluster.

It belongs to the TtcA family. As to quaternary structure, homodimer. Mg(2+) serves as cofactor. It depends on [4Fe-4S] cluster as a cofactor.

The protein resides in the cytoplasm. The enzyme catalyses cytidine(32) in tRNA + S-sulfanyl-L-cysteinyl-[cysteine desulfurase] + AH2 + ATP = 2-thiocytidine(32) in tRNA + L-cysteinyl-[cysteine desulfurase] + A + AMP + diphosphate + H(+). It functions in the pathway tRNA modification. In terms of biological role, catalyzes the ATP-dependent 2-thiolation of cytidine in position 32 of tRNA, to form 2-thiocytidine (s(2)C32). The sulfur atoms are provided by the cysteine/cysteine desulfurase (IscS) system. In Psychrobacter cryohalolentis (strain ATCC BAA-1226 / DSM 17306 / VKM B-2378 / K5), this protein is tRNA-cytidine(32) 2-sulfurtransferase.